The chain runs to 347 residues: DNA polymerase III subunit delta (347 aa).

This sequence belongs to the DNA polymerase HolA subunit family. As to quaternary structure, component of the DNA clamp loading complex consisting of tau(3):delta(1):delta'(1). The DNA polymerase III holoenzyme complex contains at least 10 different subunits organized into 3 functionally essential subassemblies: the Pol III core, the beta sliding clamp processivity factor and the clamp-loading complex. The Pol III core (subunits alpha, epsilon and theta) contains the polymerase and the 3'-5' exonuclease proofreading activities. The polymerase is tethered to the template via the dimeric beta sliding clamp processivity factor. The DNA clamp-loading complex assembles the beta sliding clamp onto the primed template and plays a central role in the organization and communication at the replication fork.

The protein localises to the cytoplasm. It localises to the nucleoid. The enzyme catalyses DNA(n) + a 2'-deoxyribonucleoside 5'-triphosphate = DNA(n+1) + diphosphate. In terms of biological role, part of the beta sliding clamp loading complex, which hydrolyzes ATP to load the beta clamp onto primed DNA to form the DNA replication pre-initiation complex. DNA polymerase III is a complex, multichain enzyme responsible for most of the replicative synthesis in bacteria. This DNA polymerase also exhibits 3'-5' exonuclease activity. The delta subunit is the wrench that will open the beta subunit dimer. The DNA clamp loading complex (tau(3),delta,delta') is thought to load beta dimers onto DNA by binding ATP which alters the complex's conformation so it can bind beta sliding clamp dimers and open them at one interface. Primed DNA is recognized, ATP is hydrolyzed releasing the clamp loading complex and closing the beta sliding clamp ring around the primed DNA. The sequence is that of DNA polymerase III subunit delta from Bacillus subtilis (strain 168).